Consider the following 408-residue polypeptide: S-adenosylmethionine synthase (408 aa).

Residue 142 to 147 (GEGSGD) coordinates ATP.

The protein belongs to the AdoMet synthase 2 family. Mg(2+) serves as cofactor.

It carries out the reaction L-methionine + ATP + H2O = S-adenosyl-L-methionine + phosphate + diphosphate. Its pathway is amino-acid biosynthesis; S-adenosyl-L-methionine biosynthesis; S-adenosyl-L-methionine from L-methionine: step 1/1. In terms of biological role, catalyzes the formation of S-adenosylmethionine from methionine and ATP. In Halobacterium salinarum (strain ATCC 29341 / DSM 671 / R1), this protein is S-adenosylmethionine synthase.